The chain runs to 96 residues: MKIRPLHDRVVVRRVEEEQKTAGGIVLPGNAQEKPTRGEVLAVGNGRILESGEVRPLDVKVGDTVIFKDGFGVEKQKIDGEEVLIMSESDILAVAE.

Belongs to the GroES chaperonin family. As to quaternary structure, heptamer of 7 subunits arranged in a ring. Interacts with the chaperonin GroEL.

The protein resides in the cytoplasm. Together with the chaperonin GroEL, plays an essential role in assisting protein folding. The GroEL-GroES system forms a nano-cage that allows encapsulation of the non-native substrate proteins and provides a physical environment optimized to promote and accelerate protein folding. GroES binds to the apical surface of the GroEL ring, thereby capping the opening of the GroEL channel. The protein is Co-chaperonin GroES of Chromohalobacter salexigens (strain ATCC BAA-138 / DSM 3043 / CIP 106854 / NCIMB 13768 / 1H11).